Here is a 216-residue protein sequence, read N- to C-terminus: GTP cyclohydrolase 1 (216 aa).

Cysteine 109, histidine 112, and cysteine 180 together coordinate Zn(2+).

It belongs to the GTP cyclohydrolase I family. As to quaternary structure, homomer.

The catalysed reaction is GTP + H2O = 7,8-dihydroneopterin 3'-triphosphate + formate + H(+). It participates in cofactor biosynthesis; 7,8-dihydroneopterin triphosphate biosynthesis; 7,8-dihydroneopterin triphosphate from GTP: step 1/1. The sequence is that of GTP cyclohydrolase 1 from Tolumonas auensis (strain DSM 9187 / NBRC 110442 / TA 4).